A 199-amino-acid polypeptide reads, in one-letter code: Imidazoleglycerol-phosphate dehydratase (199 aa).

It belongs to the imidazoleglycerol-phosphate dehydratase family.

The protein localises to the cytoplasm. It carries out the reaction D-erythro-1-(imidazol-4-yl)glycerol 3-phosphate = 3-(imidazol-4-yl)-2-oxopropyl phosphate + H2O. It participates in amino-acid biosynthesis; L-histidine biosynthesis; L-histidine from 5-phospho-alpha-D-ribose 1-diphosphate: step 6/9. This chain is Imidazoleglycerol-phosphate dehydratase, found in Acidithiobacillus ferrooxidans (strain ATCC 53993 / BNL-5-31) (Leptospirillum ferrooxidans (ATCC 53993)).